The following is a 301-amino-acid chain: N-carbamoylputrescine amidase (301 aa).

The region spanning 11 to 269 is the CN hydrolase domain; it reads VSVAAVQFAC…EDVLVAEFDL (259 aa). The Proton acceptor role is filled by Glu50. The active-site Proton donor is Lys123. Cys160 acts as the Nucleophile in catalysis.

It belongs to the carbon-nitrogen hydrolase superfamily. As to quaternary structure, homooctamer.

The enzyme catalyses N-carbamoylputrescine + H2O + 2 H(+) = putrescine + NH4(+) + CO2. Its pathway is amine and polyamine biosynthesis; putrescine biosynthesis via agmatine pathway; putrescine from N-carbamoylputrescine (amidase route): step 1/1. Involved in polyamine biosynthesis. The chain is N-carbamoylputrescine amidase (CPA) from Oryza sativa subsp. japonica (Rice).